Here is a 288-residue protein sequence, read N- to C-terminus: Male determiner protein Nix (288 aa).

3 consecutive RRM domains span residues 19-94 (YCIY…LPLS), 108-179 (IVVY…KVER), and 205-282 (RSIG…FVPE).

In terms of biological role, male determiner protein (M-factor) that controls male somatic sexual differentiation. Acts as a dominant factor that regulates the mRNA splicing of doublesex (dsx) or fruitless (fru) transcripts and promotes expression of male splice forms of dsx and fru. The chain is Male determiner protein Nix from Aedes aegypti (Yellowfever mosquito).